Consider the following 548-residue polypeptide: Probable zinc metalloprotease EGY1, chloroplastic (548 aa).

The transit peptide at 1–18 (MGTLTSVAFAAAVNIRFR) directs the protein to the chloroplast. Basic and acidic residues predominate over residues 61 to 76 (NSNRDDSIGENGETHK). The tract at residues 61–116 (NSNRDDSIGENGETHKSSVVKTATFEEEDEETSKSSSTTSSSNEFGSDKTSMPSTI) is disordered. Positions 103-116 (NEFGSDKTSMPSTI) are enriched in polar residues. 8 consecutive transmembrane segments (helical) span residues 242 to 262 (YVIA…LGIA), 290 to 310 (LYPF…ILLF), 326 to 346 (LSIP…ITQF), 361 to 381 (LAGP…GLFL), 388 to 408 (ANDL…LGLI), 416 to 436 (AALH…WCGL), 474 to 494 (MLGL…YVLI), and 516 to 536 (ALVG…WDEL).

It belongs to the peptidase M50B family. As to expression, expressed in roots, leaves, cotyledons, hypocotyls, stems, flowers and siliques.

The protein localises to the plastid. It localises to the chloroplast membrane. Functionally, membrane-associated and ATP-independent metalloprotease required for development of both thylakoid grana and well-organized lamellae in chloroplast. Required for the accumulation of chlorophyll and chlorophyll a/b binding (CAB) proteins (from both PS I and PS II) in chloroplast membranes, and for grana formation and normal chloroplast development. Involved in the regulation of nuclear gene expression in response to ammonium stress and interacts with ABA signaling. Carries out beta-casein degradation in an ATP-independent manner in vitro. The protein is Probable zinc metalloprotease EGY1, chloroplastic (EGY1) of Arabidopsis thaliana (Mouse-ear cress).